The following is a 313-amino-acid chain: Malate dehydrogenase (313 aa).

NAD(+) is bound by residues 11–16 (GAGSIG) and Asp35. Substrate contacts are provided by Arg84 and Arg90. NAD(+) is bound by residues Asn97 and 120-122 (VTN). Substrate-binding residues include Asn122 and Arg153. The Proton acceptor role is filled by His177.

It belongs to the LDH/MDH superfamily. MDH type 3 family.

The enzyme catalyses (S)-malate + NAD(+) = oxaloacetate + NADH + H(+). In terms of biological role, catalyzes the reversible oxidation of malate to oxaloacetate. The chain is Malate dehydrogenase from Ehrlichia chaffeensis (strain ATCC CRL-10679 / Arkansas).